The following is a 357-amino-acid chain: Ion-translocating oxidoreductase complex subunit D (357 aa).

Transmembrane regions (helical) follow at residues 35–55 (VWLYGWPALNLLLITLVTVLV), 88–108 (LPPWAPWWIGVIGGLLAVVLG), and 119–139 (LFNPAMVARVALLIAFPVEMT). Threonine 176 is subject to FMN phosphoryl threonine. Helical transmembrane passes span 209 to 229 (APGSLAEGSALLLALGGVYLI), 233 to 253 (VIAWEIPAVMLATLAVLATVF), 261 to 281 (YADAGVHILAGSTLLAAFFIA), 295 to 315 (AVFAAGCAVIVWVVRTYGGYP), and 316 to 336 (EATAFAVLLMNAFTPLIDHWI).

This sequence belongs to the NqrB/RnfD family. In terms of assembly, the complex is composed of six subunits: RnfA, RnfB, RnfC, RnfD, RnfE and RnfG. Requires FMN as cofactor.

The protein resides in the cell inner membrane. Its function is as follows. Part of a membrane-bound complex that couples electron transfer with translocation of ions across the membrane. The sequence is that of Ion-translocating oxidoreductase complex subunit D from Halorhodospira halophila (strain DSM 244 / SL1) (Ectothiorhodospira halophila (strain DSM 244 / SL1)).